The chain runs to 109 residues: Encapsulin nanocompartment cargo protein EncD (109 aa).

Glutamate 47 is a Fe cation binding site. The interval 61–94 (AGGRGAAAPTPAREAPAEAPRLARGSADELHEAA) is disordered. Residues 66–85 (AAAPTPAREAPAEAPRLARG) are compositionally biased toward low complexity. A probable targeting peptide region spans residues 100-106 (LTVGSLR).

The protein resides in the encapsulin nanocompartment. Its function is as follows. Cargo protein of a type 1 encapsulin nanocompartment. May help nucleate Fe atoms in the interior of the encapsulin nanocompartment. Present in about 47 copies/encapsulin nanocompartment. This chain is Encapsulin nanocompartment cargo protein EncD, found in Myxococcus xanthus (strain DK1622).